The sequence spans 140 residues: ATP synthase epsilon chain (140 aa).

This sequence belongs to the ATPase epsilon chain family. F-type ATPases have 2 components, CF(1) - the catalytic core - and CF(0) - the membrane proton channel. CF(1) has five subunits: alpha(3), beta(3), gamma(1), delta(1), epsilon(1). CF(0) has three main subunits: a, b and c.

It is found in the cell inner membrane. Functionally, produces ATP from ADP in the presence of a proton gradient across the membrane. This Saccharophagus degradans (strain 2-40 / ATCC 43961 / DSM 17024) protein is ATP synthase epsilon chain.